Here is a 1682-residue protein sequence, read N- to C-terminus: Sodium channel protein type 7 subunit alpha (1682 aa).

The Cytoplasmic segment spans residues 1 to 117 (MLASPEPKGL…RRTTIKVLVH (117 aa)). The I repeat unit spans residues 100–401 (TLSPFNCIRR…ILAMAYEEEK (302 aa)). A helical transmembrane segment spans residues 118 to 137 (PFFQLFILISVLIDCVFMSL). Topologically, residues 138 to 141 (TNLP) are extracellular. Residues 142–167 (KWRPVLENTLLGIYTFEILVKLFARG) form a helical membrane-spanning segment. The Cytoplasmic segment spans residues 168–178 (VWAGSFSFLGD). The helical transmembrane segment at 179–196 (PWNWLDFSVTVFEVIIRY) threads the bilayer. At 197 to 200 (SPLD) the chain is on the extracellular side. A helical membrane pass occupies residues 201–219 (FIPTLQTARTLRILKIIPL). Over 220–237 (NQGLKSLVGVLIHCLKQL) the chain is Cytoplasmic. A helical transmembrane segment spans residues 238 to 259 (IGVIILTLFFLSIFSLIGMGLF). At 260–338 (MGNLKHKCFR…PDQGFTNFDS (79 aa)) the chain is on the extracellular side. A disulfide bridge connects residues C267 and C307. N276, N281, and N309 each carry an N-linked (GlcNAc...) asparagine glycan. Residues 339–366 (FGWALFALFRLMAQDYPEVLYHQILYAS) constitute an intramembrane region (pore-forming). Position 367 (G367) is a topological domain, extracellular. The helical transmembrane segment at 368–407 (KVYMIFFVVVSFLFSFYMASLFLGILAMAYEEEKQRVGEI) threads the bilayer. The Cytoplasmic portion of the chain corresponds to 408–505 (SKKIEPKFQQ…EFVHRIIMAP (98 aa)). Residue S442 is modified to Phosphoserine; by PKA. An II repeat occupies 487–758 (CSPCWLKLKE…QLAVARIKKG (272 aa)). Residues 506 to 521 (FTDLFLIICIILNVCF) form a helical membrane-spanning segment. The Extracellular portion of the chain corresponds to 522–530 (LTLEHYPMS). A helical membrane pass occupies residues 531 to 559 (KQTNTLLNIGNLVFIGIFTAEMIFKIIAM). The Cytoplasmic portion of the chain corresponds to 560–568 (HPYGYFQVG). The chain crosses the membrane as a helical span at residues 569-586 (WNIFDSMIVFHGLIELCL). Residues 587-592 (ANVAGM) lie on the Extracellular side of the membrane. The helical transmembrane segment at 593–609 (ALLRLFRMLRIFKLGKY) threads the bilayer. Residues 610–626 (WPTFQILMWSLSNSWVA) are Cytoplasmic-facing. A helical transmembrane segment spans residues 627–655 (LKDLVLLLFTFIFFSAAFGMKLFGKNYEE). Residues 656–673 (FVCHIDKDCQLPRWHMHD) are Extracellular-facing. Intrachain disulfides connect C658-C664 and C696-C705. The pore-forming intramembrane region spans 674 to 700 (FFHSFLNVFRILCGEWVETLWDCMEVA). G701 is a topological domain (extracellular). The chain crosses the membrane as a helical span at residues 702–732 (QSWCIPFYLMVILIGNLLVLYLFLALVSSFS). Residues 733–934 (SCKDVTAEEN…KTCCKIVENN (202 aa)) are Cytoplasmic-facing. Phosphothreonine; by PKA is present on T777. A disordered region spans residues 801–871 (TQDFLKDKEK…SKEKIKQSSS (71 aa)). Positions 804–819 (FLKDKEKSSGTEKNAT) are enriched in basic and acidic residues. Residues 820-834 (ENESQSLIPSPSVSE) are compositionally biased toward polar residues. At S843 the chain carries Phosphoserine. Phosphoserine; by PKA occurs at positions 869 and 905. An III repeat occupies 916–1224 (KGKIWQNIRK…RKQYRRLKKL (309 aa)). A helical membrane pass occupies residues 935–953 (WFKCFIGLVTLLSTGTLAF). At 954–961 (EDIYMDQR) the chain is on the extracellular side. Residues 962 to 990 (KTIKILLEYADMIFTYIFILEMLLKWMAY) form a helical membrane-spanning segment. The Cytoplasmic portion of the chain corresponds to 991-998 (GFKAYFSN). A helical transmembrane segment spans residues 999–1020 (GWYRLDFVVVIVFCLSLIGKTR). E1021 is a topological domain (extracellular). A helical membrane pass occupies residues 1022–1040 (ELKPLISMKFLRPLRVLSQ). Topologically, residues 1041–1055 (FERMKVVVRALIKTT) are cytoplasmic. A helical transmembrane segment spans residues 1056 to 1080 (LPTLNVFLVCLMIWLIFSIMGVDLF). The Extracellular segment spans residues 1081–1127 (AGRFYECIDPTSGERFPSSEVMNKSRCESLLFNESMLWENAKMNFDN). A disulfide bond links C1087 and C1107. Residues N1103 and N1113 are each glycosylated (N-linked (GlcNAc...) asparagine). Positions 1128–1154 (VGNGFLSLLQVATFNGWITIMNSAIDS) form an intramembrane region, pore-forming. At 1155-1167 (VAVNIQPHFEVNI) the chain is on the extracellular side. Residues 1168–1202 (YMYCYFINFIIFGVFLPLSMLITVIIDNFNKHKIK) traverse the membrane as a helical segment. Over 1203 to 1250 (LGGSNIFITVKQRKQYRRLKKLMYEDSQRPVPRPLNKLQGFIFDVVTS) the chain is Cytoplasmic. The IV repeat unit spans residues 1233-1531 (VPRPLNKLQG…WKRFDPDRTQ (299 aa)). A helical transmembrane segment spans residues 1251–1272 (QAFNVIVMVLICFQAIAMMIDT). Residues 1273 to 1276 (DVQS) lie on the Extracellular side of the membrane. A helical membrane pass occupies residues 1277 to 1305 (LQMSIALYWINSIFVMLYTMECILKLIAF). The Cytoplasmic portion of the chain corresponds to 1306-1312 (RCFYFTI). A helical membrane pass occupies residues 1313–1338 (AWNIFDFMVVIFSITGLCLPMTVGSY). The Extracellular portion of the chain corresponds to 1339-1341 (LVP). Residues 1342–1362 (PSLVQLILLSRIIHMLRLGKG) form a helical membrane-spanning segment. Topologically, residues 1363–1377 (PKVFHNLMLPLMLSL) are cytoplasmic. Residues 1378–1402 (PALLNIILLIFLVMFIYAVFGMYNF) traverse the membrane as a helical segment. Residues 1403–1420 (AYVKKEAGINDVSNFETF) lie on the Extracellular side of the membrane. Residues 1421 to 1444 (GNSMLCLFQVAIFAGWDGMLDAIF) constitute an intramembrane region (pore-forming). Over 1445 to 1468 (NSKWSDCDPDKINPGTQVRGDCGN) the chain is Extracellular. A disulfide bridge links C1451 with C1466. The chain crosses the membrane as a helical span at residues 1469–1504 (PSVGIFYFVSYILISWLIIVNMYIVVVMEFLNIASK). The Cytoplasmic segment spans residues 1505 to 1682 (KKNKTLSEDD…KEKSPIQSQI (178 aa)).

The protein belongs to the sodium channel (TC 1.A.1.10) family. SCN7A subfamily. As to quaternary structure, the sodium channel formed by SCN7A is probably a heterooligomeric complex consisting of the ion conducting pore forming alpha subunit SCN7A and regulatory beta subunits such as SCN3B. Interacts with ATP1A1; activates ATP1A1 and thereby indirectly signals to nearby neurons to regulate sodium homeostasis. In terms of tissue distribution, heart and uterus.

The protein localises to the cell membrane. It carries out the reaction Na(+)(in) = Na(+)(out). Functionally, sodium leak channel functioning as an osmosensor regulating sodium ion levels in various tissues and organs. While most sodium channels are voltage-gated, SCN7A is not and lets sodium flow through membrane along its concentration gradient. In glial cells of the central nervous system, senses body-fluid sodium levels and controls salt intake behavior as well as voluntary water intake through activation of nearby neurons to maintain appropriate sodium levels in the body. By mediating sodium influx into keratinocytes, also plays a role in skin barrier homeostasis. The chain is Sodium channel protein type 7 subunit alpha from Homo sapiens (Human).